Reading from the N-terminus, the 89-residue chain is Small ribosomal subunit protein uS15 (89 aa).

Belongs to the universal ribosomal protein uS15 family. As to quaternary structure, part of the 30S ribosomal subunit. Forms a bridge to the 50S subunit in the 70S ribosome, contacting the 23S rRNA.

One of the primary rRNA binding proteins, it binds directly to 16S rRNA where it helps nucleate assembly of the platform of the 30S subunit by binding and bridging several RNA helices of the 16S rRNA. Its function is as follows. Forms an intersubunit bridge (bridge B4) with the 23S rRNA of the 50S subunit in the ribosome. The protein is Small ribosomal subunit protein uS15 of Yersinia pseudotuberculosis serotype O:1b (strain IP 31758).